Here is a 565-residue protein sequence, read N- to C-terminus: Oxygen-dependent choline dehydrogenase (565 aa).

FAD is bound at residue 7-36 (DYIICGAGSAGNVLATRLTEDPGVTVLLLE). H474 (proton acceptor) is an active-site residue.

It belongs to the GMC oxidoreductase family. The cofactor is FAD.

It catalyses the reaction choline + A = betaine aldehyde + AH2. The catalysed reaction is betaine aldehyde + NAD(+) + H2O = glycine betaine + NADH + 2 H(+). Its pathway is amine and polyamine biosynthesis; betaine biosynthesis via choline pathway; betaine aldehyde from choline (cytochrome c reductase route): step 1/1. Functionally, involved in the biosynthesis of the osmoprotectant glycine betaine. Catalyzes the oxidation of choline to betaine aldehyde and betaine aldehyde to glycine betaine at the same rate. This Burkholderia mallei (strain ATCC 23344) protein is Oxygen-dependent choline dehydrogenase.